The primary structure comprises 805 residues: Mitochondrial inner membrane m-AAA protease component AFG3L2 (805 aa).

The transit peptide at 1-39 (MAHRCLLLWGRGACRPRGMPPMLLPGGRTGSTERLYLRM) directs the protein to the mitochondrion. Positions 40–67 (LYRYATTQAKTSRNSLLTDVIAAYQRLC) are cleaved as a propeptide — removed in mature form. A disordered region spans residues 74 to 127 (FEKYFPNGKNGKKTSEPKEVMGEKKEPKPAAAPRPSGGGVGGGGKRGGKKDDSH). Over residues 86 to 101 (KTSEPKEVMGEKKEPK) the composition is skewed to basic and acidic residues. Residues 109-118 (SGGGVGGGGK) are compositionally biased toward gly residues. Lysine 118 bears the N6-succinyllysine mark. 2 consecutive transmembrane segments (helical) span residues 144–164 (FKMY…YFLF) and 252–272 (GSFL…LYTI). Positions 311, 312, 353, 354, 355, 356, 357, and 491 each coordinate ATP. Zn(2+) is bound at residue histidine 575. Residue glutamate 576 is part of the active site. Zn(2+) contacts are provided by histidine 579 and aspartate 650. The tract at residues 760 to 805 (FVEGTGSLDEDTSLPEGLKDWNREREGSEEPSGEKVTSPVQGAGPA) is disordered. Over residues 776–787 (GLKDWNREREGS) the composition is skewed to basic and acidic residues.

In the N-terminal section; belongs to the AAA ATPase family. It in the C-terminal section; belongs to the peptidase M41 family. In terms of assembly, homohexamer. Forms heterohexamers with SPG7. The m-AAA protease is either composed of homohexamers of AFG3L2 or heterohexamers of AFG3L2 and SPG7. Interacts with MAIP1. Interacts with DNAJC19. Interacts with PHB2. The cofactor is Zn(2+). In terms of processing, upon import into the mitochondrion, the N-terminal transit peptide is cleaved to generate an intermediate form which undergoes autocatalytic proteolytic processing to generate the proteolytically active mature form.

It localises to the mitochondrion inner membrane. The enzyme catalyses ATP + H2O = ADP + phosphate + H(+). Its function is as follows. Catalytic component of the m-AAA protease, a protease that plays a key role in proteostasis of inner mitochondrial membrane proteins, and which is essential for axonal and neuron development. AFG3L2 possesses both ATPase and protease activities: the ATPase activity is required to unfold substrates, threading them into the internal proteolytic cavity for hydrolysis into small peptide fragments. The m-AAA protease carries out protein quality control in the inner membrane of the mitochondria by mediating degradation of mistranslated or misfolded polypeptides. The m-AAA protease complex also promotes the processing and maturation of mitochondrial proteins, such as MRPL32/bL32m, PINK1 and SP7. Mediates protein maturation of the mitochondrial ribosomal subunit MRPL32/bL32m by catalyzing the cleavage of the presequence of MRPL32/bL32m prior to assembly into the mitochondrial ribosome. Required for SPG7 maturation into its active mature form after SPG7 cleavage by mitochondrial-processing peptidase (MPP). Required for the maturation of PINK1 into its 52kDa mature form after its cleavage by mitochondrial-processing peptidase (MPP). Acts as a regulator of calcium in neurons by mediating degradation of SMDT1/EMRE before its assembly with the uniporter complex, limiting the availability of SMDT1/EMRE for MCU assembly and promoting efficient assembly of gatekeeper subunits with MCU. Promotes the proteolytic degradation of GHITM upon hyperpolarization of mitochondria: progressive GHITM degradation leads to respiratory complex I degradation and broad reshaping of the mitochondrial proteome by AFG3L2. Also acts as a regulator of mitochondrial glutathione homeostasis by mediating cleavage and degradation of SLC25A39. SLC25A39 cleavage is prevented when SLC25A39 binds iron-sulfur. Involved in the regulation of OMA1-dependent processing of OPA1. May act by mediating processing of OMA1 precursor, participating in OMA1 maturation. This chain is Mitochondrial inner membrane m-AAA protease component AFG3L2 (AFG3L2), found in Bos taurus (Bovine).